The sequence spans 239 residues: Probable transcriptional regulatory protein YeeI (239 aa).

This sequence belongs to the TACO1 family. YeeN subfamily.

It is found in the cytoplasm. The polypeptide is Probable transcriptional regulatory protein YeeI (yeeI) (Bacillus subtilis (strain 168)).